Here is a 113-residue protein sequence, read N- to C-terminus: Large ribosomal subunit protein bL20c (113 aa).

The protein belongs to the bacterial ribosomal protein bL20 family.

Its subcellular location is the plastid. It localises to the chloroplast. Its function is as follows. Binds directly to 23S ribosomal RNA and is necessary for the in vitro assembly process of the 50S ribosomal subunit. It is not involved in the protein synthesizing functions of that subunit. This is Large ribosomal subunit protein bL20c from Staurastrum punctulatum (Green alga).